We begin with the raw amino-acid sequence, 747 residues long: RNA polymerase II assembly factor rtp1 (747 aa).

7 HEAT repeats span residues 37–75, 103–141, 320–358, 381–418, 459–485, 486–523, and 557–594; these read NYFL…LLGV, QIYN…NCHE, DIIR…VCGT, SQLA…NVDS, EENE…LDLE, NPIS…SKDD, and INPV…KYDD.

The protein belongs to the Tango6 family. As to quaternary structure, interacts with RNA polymerase II subunits. Interacts with nuclear pore complex subunits.

It localises to the cytoplasm. Its subcellular location is the nucleus. In terms of biological role, required for the cytoplasmic assembly and the nuclear import of RNA polymerase II. In Schizosaccharomyces pombe (strain 972 / ATCC 24843) (Fission yeast), this protein is RNA polymerase II assembly factor rtp1.